The sequence spans 393 residues: Leucine aminopeptidase 1 (393 aa).

A signal peptide spans 1–18 (MKLSQVSALAACVPAATA). Residues 19–84 (RFVELMEADH…GSQGLRIKES (66 aa)) constitute a propeptide that is removed on maturation. Asparagine 176 is a glycosylation site (N-linked (GlcNAc...) asparagine). Zn(2+) contacts are provided by histidine 184, aspartate 202, glutamate 241, and aspartate 268. The cysteines at positions 317 and 321 are disulfide-linked. Histidine 350 serves as a coordination point for Zn(2+).

The protein belongs to the peptidase M28 family. M28E subfamily. As to quaternary structure, monomer. Zn(2+) serves as cofactor.

Its subcellular location is the secreted. Extracellular aminopeptidase that allows assimilation of proteinaceous substrates. This chain is Leucine aminopeptidase 1 (LAP1), found in Metarhizium robertsii (strain ARSEF 23 / ATCC MYA-3075) (Metarhizium anisopliae (strain ARSEF 23)).